The sequence spans 147 residues: UPF0306 protein YhbP (147 aa).

It belongs to the UPF0306 family.

This Salmonella arizonae (strain ATCC BAA-731 / CDC346-86 / RSK2980) protein is UPF0306 protein YhbP.